Reading from the N-terminus, the 151-residue chain is Ribonuclease H (151 aa).

Residues 1–143 (MYKKIEIFTD…CDQLARLAAK (143 aa)) form the RNase H type-1 domain. Mg(2+) contacts are provided by Asp-10, Glu-48, Asp-70, and Asp-135.

This sequence belongs to the RNase H family. As to quaternary structure, monomer. The cofactor is Mg(2+).

It localises to the cytoplasm. The catalysed reaction is Endonucleolytic cleavage to 5'-phosphomonoester.. Endonuclease that specifically degrades the RNA of RNA-DNA hybrids. The sequence is that of Ribonuclease H from Blochmanniella pennsylvanica (strain BPEN).